The sequence spans 190 residues: Peptidyl-tRNA hydrolase (190 aa).

Tyr-18 serves as a coordination point for tRNA. His-23 functions as the Proton acceptor in the catalytic mechanism. Positions 69, 71, and 117 each coordinate tRNA.

This sequence belongs to the PTH family. In terms of assembly, monomer.

The protein resides in the cytoplasm. The catalysed reaction is an N-acyl-L-alpha-aminoacyl-tRNA + H2O = an N-acyl-L-amino acid + a tRNA + H(+). In terms of biological role, hydrolyzes ribosome-free peptidyl-tRNAs (with 1 or more amino acids incorporated), which drop off the ribosome during protein synthesis, or as a result of ribosome stalling. Catalyzes the release of premature peptidyl moieties from peptidyl-tRNA molecules trapped in stalled 50S ribosomal subunits, and thus maintains levels of free tRNAs and 50S ribosomes. The sequence is that of Peptidyl-tRNA hydrolase from Rhodococcus erythropolis (strain PR4 / NBRC 100887).